We begin with the raw amino-acid sequence, 452 residues long: MSLDIVILAAGQGTRMRSALPKVLHPVAGQSMLGHVIATARALQPRSIQVVIGHGAEQVRQRLAGDDLNFVVQAEQLGTGHAVAQALPHLSAERVLILYGDVPLIEAETLQRLLQKVGPEQLALLTVTLDDPTGYGRIVRDGRGEVQAIVEHKDASADQRAIREGNTGILAVPGSRIGEWLGRLSNSNAQGEYYLTDVIAMAVADGLRVATEQPADAMEVQGANDRIQLAELERHYQLRAARRLMAQGVTLRDPARFDLRGEVSVGRDVLIDVNVVLEGRVVIEDDVQIGPNCVIKDSTLRRGAVVKANSHLEGAVMGEGADCGPFARLRPGSLLGAKAHVGNFVEMKNASLGDGAKAGHLSYLGDAEIGARSNIGAGTITCNYDGANKFRTVMGEDVFIGSNSSLVAPLNLGDGATTGAGSTITDDVPAHTLALGRGRQRNIDGWQRPTKK.

Positions 1 to 226 are pyrophosphorylase; that stretch reads MSLDIVILAA…AMEVQGANDR (226 aa). Residues 8 to 11, lysine 22, glutamine 73, 78 to 79, 99 to 101, glycine 136, glutamate 151, asparagine 166, and asparagine 224 each bind UDP-N-acetyl-alpha-D-glucosamine; these read LAAG, GT, and YGD. Aspartate 101 is a binding site for Mg(2+). Mg(2+) is bound at residue asparagine 224. Residues 227-247 form a linker region; sequence IQLAELERHYQLRAARRLMAQ. An N-acetyltransferase region spans residues 248 to 452; it reads GVTLRDPARF…IDGWQRPTKK (205 aa). UDP-N-acetyl-alpha-D-glucosamine-binding residues include arginine 330 and lysine 348. Histidine 360 functions as the Proton acceptor in the catalytic mechanism. 2 residues coordinate UDP-N-acetyl-alpha-D-glucosamine: tyrosine 363 and asparagine 374. Acetyl-CoA is bound by residues alanine 377, 383–384, serine 402, alanine 420, and arginine 437; that span reads NY.

This sequence in the N-terminal section; belongs to the N-acetylglucosamine-1-phosphate uridyltransferase family. In the C-terminal section; belongs to the transferase hexapeptide repeat family. As to quaternary structure, homotrimer. The cofactor is Mg(2+).

It is found in the cytoplasm. It carries out the reaction alpha-D-glucosamine 1-phosphate + acetyl-CoA = N-acetyl-alpha-D-glucosamine 1-phosphate + CoA + H(+). The catalysed reaction is N-acetyl-alpha-D-glucosamine 1-phosphate + UTP + H(+) = UDP-N-acetyl-alpha-D-glucosamine + diphosphate. Its pathway is nucleotide-sugar biosynthesis; UDP-N-acetyl-alpha-D-glucosamine biosynthesis; N-acetyl-alpha-D-glucosamine 1-phosphate from alpha-D-glucosamine 6-phosphate (route II): step 2/2. It functions in the pathway nucleotide-sugar biosynthesis; UDP-N-acetyl-alpha-D-glucosamine biosynthesis; UDP-N-acetyl-alpha-D-glucosamine from N-acetyl-alpha-D-glucosamine 1-phosphate: step 1/1. It participates in bacterial outer membrane biogenesis; LPS lipid A biosynthesis. In terms of biological role, catalyzes the last two sequential reactions in the de novo biosynthetic pathway for UDP-N-acetylglucosamine (UDP-GlcNAc). The C-terminal domain catalyzes the transfer of acetyl group from acetyl coenzyme A to glucosamine-1-phosphate (GlcN-1-P) to produce N-acetylglucosamine-1-phosphate (GlcNAc-1-P), which is converted into UDP-GlcNAc by the transfer of uridine 5-monophosphate (from uridine 5-triphosphate), a reaction catalyzed by the N-terminal domain. The chain is Bifunctional protein GlmU from Stutzerimonas stutzeri (strain A1501) (Pseudomonas stutzeri).